The primary structure comprises 413 residues: MDHLKRQDEKVFAAIEAELGRQRSKIELIASENFVSEAVMEAQGSVLTNKYAEGYPGKRYYGGCEHVDVVEDIARDRVKEIFGAEHVNVQPHSGAQANMAVYFTILEQGDTVLGMNLSHGGHLTHGSPVNFSGVQYNFVEYGVDADSHRINYDDVLAKAKEHKPKLIVAGASAYPRVIDFKRFREIADEVGAYLMVDMAHIAGLVAAGLHPNPVPHAHFVTTTTHKTLRGPRGGMILCEEKFAKQIDKSIFPGIQGGPLMHVIAAKAVAFGETLQEDFKTYAQNIINNANRLAEGLQKEGLTLVSGGTDNHLILIDVRNLEITGKVAEHVLDEVGITVNKNTIPFETASPFVTSGVRIGTAAVTSRGFGLEEMDEIASLIAYTLKNHENEAALEEARKRVEALTSKFSMYPNL.

(6S)-5,6,7,8-tetrahydrofolate is bound by residues Leu-117 and 121-123; that span reads GHL. N6-(pyridoxal phosphate)lysine is present on Lys-226. (6S)-5,6,7,8-tetrahydrofolate-binding positions include Glu-239 and 349–351; that span reads SPF.

This sequence belongs to the SHMT family. As to quaternary structure, homodimer. Pyridoxal 5'-phosphate serves as cofactor.

The protein resides in the cytoplasm. It carries out the reaction (6R)-5,10-methylene-5,6,7,8-tetrahydrofolate + glycine + H2O = (6S)-5,6,7,8-tetrahydrofolate + L-serine. Its pathway is one-carbon metabolism; tetrahydrofolate interconversion. The protein operates within amino-acid biosynthesis; glycine biosynthesis; glycine from L-serine: step 1/1. Functionally, catalyzes the reversible interconversion of serine and glycine with tetrahydrofolate (THF) serving as the one-carbon carrier. This reaction serves as the major source of one-carbon groups required for the biosynthesis of purines, thymidylate, methionine, and other important biomolecules. Also exhibits THF-independent aldolase activity toward beta-hydroxyamino acids, producing glycine and aldehydes, via a retro-aldol mechanism. The protein is Serine hydroxymethyltransferase of Bacillus cereus (strain G9842).